We begin with the raw amino-acid sequence, 449 residues long: Exodeoxyribonuclease 7 large subunit (449 aa).

This sequence belongs to the XseA family. In terms of assembly, heterooligomer composed of large and small subunits.

Its subcellular location is the cytoplasm. The enzyme catalyses Exonucleolytic cleavage in either 5'- to 3'- or 3'- to 5'-direction to yield nucleoside 5'-phosphates.. Its function is as follows. Bidirectionally degrades single-stranded DNA into large acid-insoluble oligonucleotides, which are then degraded further into small acid-soluble oligonucleotides. This chain is Exodeoxyribonuclease 7 large subunit, found in Salmonella paratyphi A (strain ATCC 9150 / SARB42).